The primary structure comprises 300 residues: Acetaldehyde dehydrogenase (300 aa).

NAD(+) is bound at residue 11-14; it reads SGNI. Cys-129 functions as the Acyl-thioester intermediate in the catalytic mechanism. Residues 160–168 and Asn-271 contribute to the NAD(+) site; that span reads SVGPGTRQN.

This sequence belongs to the acetaldehyde dehydrogenase family.

The enzyme catalyses acetaldehyde + NAD(+) + CoA = acetyl-CoA + NADH + H(+). The protein is Acetaldehyde dehydrogenase (mhpF) of Pseudoalteromonas translucida (strain TAC 125).